A 113-amino-acid chain; its full sequence is uncharacterized protein (113 aa).

The signal sequence occupies residues 1-16; that stretch reads MKCLVVLTALFGISTA. Positions 81–101 are enriched in gly residues; it reads GGNGGNGGGGNGGNNGNGNGN. Residues 81–103 form a disordered region; that stretch reads GGNGGNGGGGNGGNNGNGNGNNG.

As to expression, nacreous layer of shell (at protein level).

The protein resides in the secreted. This is an uncharacterized protein from Margaritifera margaritifera (Freshwater pearl mussel).